Here is a 177-residue protein sequence, read N- to C-terminus: MVMSAAMEAVRARIRDVPDFPQKGIVFKDITPVLADPTTFREVIDAFVARWKDERISKVVGIESRGFLFAAPLAYALGAGLTIARKPGKLPWETIREVYSLEYGENSLELHIDAVKAGERVLVVDDVLATGGTADAVGRLVTRQGATLVAYSFLVELGFLGGAKRLGREHVHALLSY.

Belongs to the purine/pyrimidine phosphoribosyltransferase family. In terms of assembly, homodimer.

Its subcellular location is the cytoplasm. It catalyses the reaction AMP + diphosphate = 5-phospho-alpha-D-ribose 1-diphosphate + adenine. The protein operates within purine metabolism; AMP biosynthesis via salvage pathway; AMP from adenine: step 1/1. Catalyzes a salvage reaction resulting in the formation of AMP, that is energically less costly than de novo synthesis. This chain is Adenine phosphoribosyltransferase, found in Anaeromyxobacter sp. (strain Fw109-5).